Reading from the N-terminus, the 150-residue chain is MAKEVAGKLRLQIRGGAANPSPPVGPALGSKGVNIMEFCKQFNAKTQDRIGKLLPVVVTYYVDKSFDFVIKNPPVAVQLLEIVKLKSGSAEPNRKKIAEITWEQVKAIAEYKMADLNCFSVEKAIQMVIGTAKSMGIHVKRDFSEKQLNS.

Belongs to the universal ribosomal protein uL11 family. Part of the ribosomal stalk of the 50S ribosomal subunit. Interacts with L10 and the large rRNA to form the base of the stalk. L10 forms an elongated spine to which L12 dimers bind in a sequential fashion forming a multimeric L10(L12)X complex. Post-translationally, one or more lysine residues are methylated.

In terms of biological role, forms part of the ribosomal stalk which helps the ribosome interact with GTP-bound translation factors. The chain is Large ribosomal subunit protein uL11 from Azobacteroides pseudotrichonymphae genomovar. CFP2.